The sequence spans 545 residues: Chaperonin GroEL 1 (545 aa).

Residues Thr-30 to Pro-33, Lys-51, Asp-87 to Thr-91, Gly-415, Asn-479 to Ala-481, and Asp-495 each bind ATP.

The protein belongs to the chaperonin (HSP60) family. As to quaternary structure, forms a cylinder of 14 subunits composed of two heptameric rings stacked back-to-back. Interacts with the co-chaperonin GroES.

Its subcellular location is the cytoplasm. It catalyses the reaction ATP + H2O + a folded polypeptide = ADP + phosphate + an unfolded polypeptide.. Its function is as follows. Together with its co-chaperonin GroES, plays an essential role in assisting protein folding. The GroEL-GroES system forms a nano-cage that allows encapsulation of the non-native substrate proteins and provides a physical environment optimized to promote and accelerate protein folding. The sequence is that of Chaperonin GroEL 1 from Methylococcus capsulatus (strain ATCC 33009 / NCIMB 11132 / Bath).